Consider the following 694-residue polypeptide: Polyphosphate kinase (694 aa).

Asparagine 45 is a binding site for ATP. Residues arginine 367 and arginine 397 each contribute to the Mg(2+) site. Residue histidine 427 is the Phosphohistidine intermediate of the active site. ATP contacts are provided by tyrosine 460, arginine 553, and histidine 580.

This sequence belongs to the polyphosphate kinase 1 (PPK1) family. Requires Mg(2+) as cofactor. Post-translationally, an intermediate of this reaction is the autophosphorylated ppk in which a phosphate is covalently linked to a histidine residue through a N-P bond.

The catalysed reaction is [phosphate](n) + ATP = [phosphate](n+1) + ADP. Functionally, catalyzes the reversible transfer of the terminal phosphate of ATP to form a long-chain polyphosphate (polyP). The protein is Polyphosphate kinase of Campylobacter jejuni (strain RM1221).